Reading from the N-terminus, the 152-residue chain is Nucleoside diphosphate kinase B (152 aa).

Residues 1–66 (MAHAERTFIA…DRPFFPGLVK (66 aa)) form an interaction with AKAP13 region. Residues lysine 12, phenylalanine 60, arginine 88, threonine 94, arginine 105, and asparagine 115 each contribute to the ATP site. The active-site Pros-phosphohistidine intermediate is histidine 118.

This sequence belongs to the NDK family. As to quaternary structure, hexamer of two different chains: An and B (A6, A5B, A4B2, A3B3, A2B4, AB5, B6). Interacts with CAPN8. Interacts with AKAP13. Interacts with ITGB1BP1 (via C-terminal domain region). Interacts with BCL2L10. It depends on Mg(2+) as a cofactor.

Its subcellular location is the cytoplasm. It localises to the cell projection. The protein localises to the lamellipodium. It is found in the ruffle. The protein resides in the nucleus. The enzyme catalyses a 2'-deoxyribonucleoside 5'-diphosphate + ATP = a 2'-deoxyribonucleoside 5'-triphosphate + ADP. The catalysed reaction is a ribonucleoside 5'-diphosphate + ATP = a ribonucleoside 5'-triphosphate + ADP. It catalyses the reaction ATP + protein L-histidine = ADP + protein N-phospho-L-histidine.. Its function is as follows. Major role in the synthesis of nucleoside triphosphates other than ATP. The ATP gamma phosphate is transferred to the NDP beta phosphate via a ping-pong mechanism, using a phosphorylated active-site intermediate. Negatively regulates Rho activity by interacting with AKAP13/LBC. Acts as a transcriptional activator of the MYC gene; binds DNA non-specifically. Binds to both single-stranded guanine- and cytosine-rich strands within the nuclease hypersensitive element (NHE) III(1) region of the MYC gene promoter. Does not bind to duplex NHE III(1). Has G-quadruplex (G4) DNA-binding activity, which is independent of its nucleotide-binding and kinase activity. Binds both folded and unfolded G4 with similar low nanomolar affinities. Stabilizes folded G4s regardless of whether they are prefolded or not. Exhibits histidine protein kinase activity. This is Nucleoside diphosphate kinase B (NME2) from Bos taurus (Bovine).